Here is a 227-residue protein sequence, read N- to C-terminus: Transmembrane emp24 domain-containing protein 1 (227 aa).

A signal peptide spans 1-24 (MMAAGAAVALALWLLLPAVGVGEA). Residues 25-194 (GPPPIQDGEF…LQEDNLERVN (170 aa)) are Extracellular-facing. Residues 43 to 125 (KQCFYQSAPA…EKLVFFELIF (83 aa)) form the GOLD domain. Positions 145–170 (EMLDVKMEDIKESIETMRTRLERSIQ) form a coiled coil. A helical transmembrane segment spans residues 195 to 215 (FWSAANVAVLLLVAVLQVCTL). Topologically, residues 216 to 227 (KRFFHDKRPVPT) are cytoplasmic. Positions 218-219 (FF) match the COPII vesicle coat-binding motif. The COPI vesicle coat-binding motif lies at 218–227 (FFHDKRPVPT).

Belongs to the EMP24/GP25L family. In terms of assembly, homodimer in endoplasmic reticulum, endoplasmic reticulum-Golgi intermediate compartment and cis-Golgi network. Interacts with IL1RL1. Interacts with RNF26; this interaction is important to modulate innate immune signaling through the cGAS-STING pathway. In terms of tissue distribution, widely expressed.

It localises to the cell membrane. It is found in the endoplasmic reticulum membrane. The protein localises to the golgi apparatus. Its subcellular location is the cis-Golgi network membrane. The protein resides in the endoplasmic reticulum-Golgi intermediate compartment membrane. Its function is as follows. Potential role in vesicular protein trafficking, mainly in the early secretory pathway. May act as a cargo receptor at the lumenal side for incorporation of secretory cargo molecules into transport vesicles and may be involved in vesicle coat formation at the cytoplasmic side. Plays a positive role in IL-33-mediated IL-8 and IL-6 production by interacting with interleukin-33 receptor IL1RL1. Plays also a role in the modulation of innate immune signaling through the cGAS-STING pathway by interacting with RNF26. In Mus musculus (Mouse), this protein is Transmembrane emp24 domain-containing protein 1 (Tmed1).